Here is a 382-residue protein sequence, read N- to C-terminus: UDP-4-amino-4-deoxy-L-arabinose--oxoglutarate aminotransferase (382 aa).

Lys182 carries the N6-(pyridoxal phosphate)lysine modification.

It belongs to the DegT/DnrJ/EryC1 family. ArnB subfamily. As to quaternary structure, homodimer. Pyridoxal 5'-phosphate is required as a cofactor.

It carries out the reaction UDP-4-amino-4-deoxy-beta-L-arabinose + 2-oxoglutarate = UDP-beta-L-threo-pentopyranos-4-ulose + L-glutamate. It participates in nucleotide-sugar biosynthesis; UDP-4-deoxy-4-formamido-beta-L-arabinose biosynthesis; UDP-4-deoxy-4-formamido-beta-L-arabinose from UDP-alpha-D-glucuronate: step 2/3. Its pathway is bacterial outer membrane biogenesis; lipopolysaccharide biosynthesis. Functionally, catalyzes the conversion of UDP-4-keto-arabinose (UDP-Ara4O) to UDP-4-amino-4-deoxy-L-arabinose (UDP-L-Ara4N). The modified arabinose is attached to lipid A and is required for resistance to polymyxin and cationic antimicrobial peptides. This Pectobacterium atrosepticum (strain SCRI 1043 / ATCC BAA-672) (Erwinia carotovora subsp. atroseptica) protein is UDP-4-amino-4-deoxy-L-arabinose--oxoglutarate aminotransferase.